Consider the following 73-residue polypeptide: Probable cytochrome b-c1 complex subunit 8 (73 aa).

Residues 1 to 42 are Mitochondrial matrix-facing; it reads MGQASKVFGKQITYSVSPFQQKLFVNYFKNAIPHLRRGVKDN. The chain crosses the membrane as a helical span at residues 43-60; sequence FFCSVPYFAALYITVNWA. Residues 61-73 lie on the Mitochondrial intermembrane side of the membrane; that stretch reads NETYHNEMKDHWY.

The protein belongs to the UQCRQ/QCR8 family. Component of the ubiquinol-cytochrome c oxidoreductase (cytochrome b-c1 complex, complex III, CIII), a multisubunit enzyme composed of 3 respiratory subunits cytochrome b, cytochrome c1 and Rieske protein, 2 core protein subunits, and additional low-molecular weight protein subunits. The complex exists as an obligatory dimer and forms supercomplexes (SCs) in the inner mitochondrial membrane with cytochrome c oxidase (complex IV, CIV).

It localises to the mitochondrion inner membrane. Its function is as follows. Component of the ubiquinol-cytochrome c oxidoreductase, a multisubunit transmembrane complex that is part of the mitochondrial electron transport chain which drives oxidative phosphorylation. The respiratory chain contains 3 multisubunit complexes succinate dehydrogenase (complex II, CII), ubiquinol-cytochrome c oxidoreductase (cytochrome b-c1 complex, complex III, CIII) and cytochrome c oxidase (complex IV, CIV), that cooperate to transfer electrons derived from NADH and succinate to molecular oxygen, creating an electrochemical gradient over the inner membrane that drives transmembrane transport and the ATP synthase. The cytochrome b-c1 complex catalyzes electron transfer from ubiquinol to cytochrome c, linking this redox reaction to translocation of protons across the mitochondrial inner membrane, with protons being carried across the membrane as hydrogens on the quinol. In the process called Q cycle, 2 protons are consumed from the matrix, 4 protons are released into the intermembrane space and 2 electrons are passed to cytochrome c. In Dictyostelium discoideum (Social amoeba), this protein is Probable cytochrome b-c1 complex subunit 8.